The chain runs to 242 residues: Uroporphyrinogen-III C-methyltransferase (242 aa).

S-adenosyl-L-homocysteine-binding positions include Pro12, 88 to 90, 118 to 119, and Met170; these read GGD and TS.

It belongs to the precorrin methyltransferase family. As to quaternary structure, homodimer.

The enzyme catalyses uroporphyrinogen III + 2 S-adenosyl-L-methionine = precorrin-2 + 2 S-adenosyl-L-homocysteine + H(+). It functions in the pathway cofactor biosynthesis; adenosylcobalamin biosynthesis; precorrin-2 from uroporphyrinogen III: step 1/1. Catalyzes the two successive C-2 and C-7 methylation reactions involved in the conversion of uroporphyrinogen III to precorrin-2 via the intermediate formation of precorrin-1. It is a step in the biosynthesis of both cobalamin (vitamin B12) and coenzyme F430. The protein is Uroporphyrinogen-III C-methyltransferase (cobA) of Methanocaldococcus jannaschii (strain ATCC 43067 / DSM 2661 / JAL-1 / JCM 10045 / NBRC 100440) (Methanococcus jannaschii).